Reading from the N-terminus, the 515-residue chain is Pescadillo homolog (515 aa).

Residues 270–327 (EVLAALNHTLKIIQTQEEDLEVDEFPIDPNSEDAEAIQAQKEEETKLERLKNLFSECK) adopt a coiled-coil conformation. The 94-residue stretch at 318 to 411 (RLKNLFSECK…KLLPVEEYFP (94 aa)) folds into the BRCT domain. Residues 477–515 (RLYEKIMHSKKKKRSEVRKLESKRKVHDEEKAKKKLKSS) form a disordered region. Basic residues predominate over residues 484–501 (HSKKKKRSEVRKLESKRK).

This sequence belongs to the pescadillo family.

It localises to the nucleus. The protein resides in the nucleolus. Its subcellular location is the nucleoplasm. Its function is as follows. Required for maturation of ribosomal RNAs and formation of the large ribosomal subunit. This chain is Pescadillo homolog, found in Nematostella vectensis (Starlet sea anemone).